The primary structure comprises 232 residues: Aspartate/glutamate leucyltransferase (232 aa).

Belongs to the R-transferase family. Bpt subfamily.

Its subcellular location is the cytoplasm. It carries out the reaction N-terminal L-glutamyl-[protein] + L-leucyl-tRNA(Leu) = N-terminal L-leucyl-L-glutamyl-[protein] + tRNA(Leu) + H(+). The enzyme catalyses N-terminal L-aspartyl-[protein] + L-leucyl-tRNA(Leu) = N-terminal L-leucyl-L-aspartyl-[protein] + tRNA(Leu) + H(+). Functionally, functions in the N-end rule pathway of protein degradation where it conjugates Leu from its aminoacyl-tRNA to the N-termini of proteins containing an N-terminal aspartate or glutamate. In Vibrio vulnificus (strain CMCP6), this protein is Aspartate/glutamate leucyltransferase.